Consider the following 127-residue polypeptide: Riboflavin kinase (127 aa).

10–15 (GLGEGR) is a binding site for CDP. The Mg(2+) site is built by Thr39 and Asn41. FMN contacts are provided by Thr96 and Glu104. Residue 109 to 112 (IQLR) participates in CDP binding.

The protein belongs to the archaeal riboflavin kinase family. Requires Mg(2+) as cofactor.

The enzyme catalyses riboflavin + CTP = CDP + FMN + H(+). The protein operates within cofactor biosynthesis; FMN biosynthesis; FMN from riboflavin (CTP route): step 1/1. In terms of biological role, catalyzes the CTP-dependent phosphorylation of riboflavin (vitamin B2) to form flavin mononucleotide (FMN). The polypeptide is Riboflavin kinase (Methanococcus maripaludis (strain C5 / ATCC BAA-1333)).